Here is a 196-residue protein sequence, read N- to C-terminus: Holliday junction branch migration complex subunit RuvA (196 aa).

A domain I region spans residues 1 to 62 (MYEYINGLIT…ENEMTLYGFI (62 aa)). Positions 63 to 141 (DENEKYLFNK…DLALSAGMTV (79 aa)) are domain II. The interval 142-146 (ETVPT) is flexible linker. Residues 147 to 196 (TDNQALADALAALESLGYSAKDVAKLQTVLANQKDTTDGYIRSALKFLVK) form a domain III region.

This sequence belongs to the RuvA family. Homotetramer. Forms an RuvA(8)-RuvB(12)-Holliday junction (HJ) complex. HJ DNA is sandwiched between 2 RuvA tetramers; dsDNA enters through RuvA and exits via RuvB. An RuvB hexamer assembles on each DNA strand where it exits the tetramer. Each RuvB hexamer is contacted by two RuvA subunits (via domain III) on 2 adjacent RuvB subunits; this complex drives branch migration. In the full resolvosome a probable DNA-RuvA(4)-RuvB(12)-RuvC(2) complex forms which resolves the HJ.

It is found in the cytoplasm. Its function is as follows. The RuvA-RuvB-RuvC complex processes Holliday junction (HJ) DNA during genetic recombination and DNA repair, while the RuvA-RuvB complex plays an important role in the rescue of blocked DNA replication forks via replication fork reversal (RFR). RuvA specifically binds to HJ cruciform DNA, conferring on it an open structure. The RuvB hexamer acts as an ATP-dependent pump, pulling dsDNA into and through the RuvAB complex. HJ branch migration allows RuvC to scan DNA until it finds its consensus sequence, where it cleaves and resolves the cruciform DNA. This is Holliday junction branch migration complex subunit RuvA from Leuconostoc citreum (strain KM20).